Here is a 388-residue protein sequence, read N- to C-terminus: Lipid-A-disaccharide synthase (388 aa).

It belongs to the LpxB family.

It carries out the reaction a lipid X + a UDP-2-N,3-O-bis[(3R)-3-hydroxyacyl]-alpha-D-glucosamine = a lipid A disaccharide + UDP + H(+). It functions in the pathway bacterial outer membrane biogenesis; LPS lipid A biosynthesis. Condensation of UDP-2,3-diacylglucosamine and 2,3-diacylglucosamine-1-phosphate to form lipid A disaccharide, a precursor of lipid A, a phosphorylated glycolipid that anchors the lipopolysaccharide to the outer membrane of the cell. This Burkholderia mallei (strain ATCC 23344) protein is Lipid-A-disaccharide synthase.